Here is a 562-residue protein sequence, read N- to C-terminus: UPF0649 protein C1442.02 (562 aa).

Phosphoserine is present on residues serine 285 and serine 286. Positions 288–308 (DEEIAKNADVPAEVDNNSTKA) are disordered.

Belongs to the UPF0649 family.

The protein localises to the cytoplasm. Its subcellular location is the nucleus. The sequence is that of UPF0649 protein C1442.02 from Schizosaccharomyces pombe (strain 972 / ATCC 24843) (Fission yeast).